Reading from the N-terminus, the 259-residue chain is Small ribosomal subunit protein uS2 (259 aa).

Residues V228–M259 are disordered. Residues E233 to M259 are compositionally biased toward acidic residues.

It belongs to the universal ribosomal protein uS2 family.

The sequence is that of Small ribosomal subunit protein uS2 from Thermosipho africanus (strain TCF52B).